The sequence spans 107 residues: MNTEFINNIGLTHYLVLAALLFVMGMAGVLLRRNVIVLLMSIELMLNSVNLTFVAFSKYLGLLDGHIMVFFVMTIAAAEAAVGLALAVSIFKRFNEVNIRFFEHLKG.

A run of 3 helical transmembrane segments spans residues 11-31 (LTHY…GVLL), 36-56 (IVLL…FVAF), and 67-87 (IMVF…LALA).

Belongs to the complex I subunit 4L family. As to quaternary structure, NDH-1 is composed of 14 different subunits. Subunits NuoA, H, J, K, L, M, N constitute the membrane sector of the complex.

It is found in the cell inner membrane. It carries out the reaction a quinone + NADH + 5 H(+)(in) = a quinol + NAD(+) + 4 H(+)(out). Functionally, NDH-1 shuttles electrons from NADH, via FMN and iron-sulfur (Fe-S) centers, to quinones in the respiratory chain. The immediate electron acceptor for the enzyme in this species is believed to be ubiquinone. Couples the redox reaction to proton translocation (for every two electrons transferred, four hydrogen ions are translocated across the cytoplasmic membrane), and thus conserves the redox energy in a proton gradient. The polypeptide is NADH-quinone oxidoreductase subunit K (Bdellovibrio bacteriovorus (strain ATCC 15356 / DSM 50701 / NCIMB 9529 / HD100)).